Consider the following 91-residue polypeptide: PqqA binding protein (91 aa).

The protein belongs to the PqqD family. As to quaternary structure, monomer. Interacts with PqqE.

The protein operates within cofactor biosynthesis; pyrroloquinoline quinone biosynthesis. Functions as a PqqA binding protein and presents PqqA to PqqE, in the pyrroloquinoline quinone (PQQ) biosynthetic pathway. In Pseudomonas fluorescens (strain SBW25), this protein is PqqA binding protein.